Consider the following 362-residue polypeptide: Protein RecA (362 aa).

77–84 (GPESSGKT) provides a ligand contact to ATP.

Belongs to the RecA family.

The protein localises to the cytoplasm. Can catalyze the hydrolysis of ATP in the presence of single-stranded DNA, the ATP-dependent uptake of single-stranded DNA by duplex DNA, and the ATP-dependent hybridization of homologous single-stranded DNAs. It interacts with LexA causing its activation and leading to its autocatalytic cleavage. This Allorhizobium ampelinum (strain ATCC BAA-846 / DSM 112012 / S4) (Agrobacterium vitis (strain S4)) protein is Protein RecA.